The following is a 357-amino-acid chain: tRNA-specific 2-thiouridylase MnmA (357 aa).

Residues 7–14 (GLSGGVDS) and Leu-33 each bind ATP. Cys-94 (nucleophile) is an active-site residue. A disulfide bridge connects residues Cys-94 and Cys-193. ATP is bound at residue Gly-119. The interval 143 to 145 (KDQ) is interaction with tRNA. The Cysteine persulfide intermediate role is filled by Cys-193. The segment at 298–299 (RY) is interaction with tRNA.

The protein belongs to the MnmA/TRMU family.

It is found in the cytoplasm. The enzyme catalyses S-sulfanyl-L-cysteinyl-[protein] + uridine(34) in tRNA + AH2 + ATP = 2-thiouridine(34) in tRNA + L-cysteinyl-[protein] + A + AMP + diphosphate + H(+). In terms of biological role, catalyzes the 2-thiolation of uridine at the wobble position (U34) of tRNA, leading to the formation of s(2)U34. The chain is tRNA-specific 2-thiouridylase MnmA from Synechococcus sp. (strain ATCC 27144 / PCC 6301 / SAUG 1402/1) (Anacystis nidulans).